A 463-amino-acid chain; its full sequence is MNTLIAITGLGIFCLLFEILNFRKGIVPFTILGLLGVLALNFYEFGTTASYYNNMITVSKFSTAFSSLFIILTIFLVALSHNFYENHQTKISDFIAIKVFLLAGAVAMVSFGNLAMFFLGIEILSIALYVLAASDRLNIKSNEAGMKYFLMGSFASGIILFGICLIYGAMGTFDIAEIHESSLSAELPIWFPIGMILMTIGMFFKIAAVPFHFWAPDVYEGSPALTTALMSTLAKVVAIATLFKLVSGLNLIPSLENQDLSNTFTNVILTISIASMTVGNIMALRQVNVKRMLAFSGISHAGFMLMTFLTIATSAGVLLYYTAAYALAGIAAFSVILYVCKNQDNEDITNFHGLGKTNPLLAAILTGSLLSMGGIPIFSGFFAKLFLFNQALHAGYVAIVIAAVINSIISVGYYFKLILAMYSKEPNEERTGKPFLIYAVAIISIGLNIALGLFPSLVLDLLN.

14 helical membrane-spanning segments follow: residues 2–22 (NTLIAITGLGIFCLLFEILNF), 25–45 (GIVPFTILGLLGVLALNFYEF), 61–81 (FSTAFSSLFIILTIFLVALSH), 91–110 (ISDFIAIKVFLLAGAVAMVS), 114–133 (LAMFFLGIEILSIALYVLAA), 149–169 (FLMGSFASGIILFGICLIYGA), 189–209 (IWFPIGMILMTIGMFFKIAAV), 223–243 (PALTTALMSTLAKVVAIATLF), 264–284 (FTNVILTISIASMTVGNIMAL), 292–312 (MLAFSGISHAGFMLMTFLTIA), 317–337 (VLLYYTAAYALAGIAAFSVIL), 362–382 (AAILTGSLLSMGGIPIFSGFF), 395–415 (GYVAIVIAAVINSIISVGYYF), and 434–454 (PFLIYAVAIISIGLNIALGLF).

Belongs to the complex I subunit 2 family. In terms of assembly, NDH-1 is composed of 14 different subunits. Subunits NuoA, H, J, K, L, M, N constitute the membrane sector of the complex.

It is found in the cell inner membrane. It catalyses the reaction a quinone + NADH + 5 H(+)(in) = a quinol + NAD(+) + 4 H(+)(out). Functionally, NDH-1 shuttles electrons from NADH, via FMN and iron-sulfur (Fe-S) centers, to quinones in the respiratory chain. The immediate electron acceptor for the enzyme in this species is believed to be a menaquinone. Couples the redox reaction to proton translocation (for every two electrons transferred, four hydrogen ions are translocated across the cytoplasmic membrane), and thus conserves the redox energy in a proton gradient. The polypeptide is NADH-quinone oxidoreductase subunit N (Flavobacterium johnsoniae (strain ATCC 17061 / DSM 2064 / JCM 8514 / BCRC 14874 / CCUG 350202 / NBRC 14942 / NCIMB 11054 / UW101) (Cytophaga johnsonae)).